We begin with the raw amino-acid sequence, 122 residues long: Small ribosomal subunit protein uS13 (122 aa).

Positions 95–122 are disordered; it reads GLPVRGQRTHTNARTRKGKAKPIAGKKK.

This sequence belongs to the universal ribosomal protein uS13 family. As to quaternary structure, part of the 30S ribosomal subunit. Forms a loose heterodimer with protein S19. Forms two bridges to the 50S subunit in the 70S ribosome.

Its function is as follows. Located at the top of the head of the 30S subunit, it contacts several helices of the 16S rRNA. In the 70S ribosome it contacts the 23S rRNA (bridge B1a) and protein L5 of the 50S subunit (bridge B1b), connecting the 2 subunits; these bridges are implicated in subunit movement. Contacts the tRNAs in the A and P-sites. This Sphingopyxis alaskensis (strain DSM 13593 / LMG 18877 / RB2256) (Sphingomonas alaskensis) protein is Small ribosomal subunit protein uS13.